The following is a 310-amino-acid chain: Ribosomal RNA small subunit methyltransferase H (310 aa).

Residues 32–34, Asp52, Phe79, Asp100, and Gln107 each bind S-adenosyl-L-methionine; that span reads GGH.

This sequence belongs to the methyltransferase superfamily. RsmH family.

The protein resides in the cytoplasm. The catalysed reaction is cytidine(1402) in 16S rRNA + S-adenosyl-L-methionine = N(4)-methylcytidine(1402) in 16S rRNA + S-adenosyl-L-homocysteine + H(+). In terms of biological role, specifically methylates the N4 position of cytidine in position 1402 (C1402) of 16S rRNA. The protein is Ribosomal RNA small subunit methyltransferase H of Geobacillus thermodenitrificans (strain NG80-2).